A 705-amino-acid chain; its full sequence is MNPTEAKAVKTEPEKKPQSSKPSVVHEKKTQEVKPKEHTEPKSLPKHSSDTGVKHAPKEKAVSKSSEQPPSEKSTKPKTKSQDKISGGGKSTVPAAAAAASAEPADKNKENKLLTSAVPAESKPSKPSGKSDMDTALDDLIDTLGEPEEMKEDNTTYTGPEVSDPMSSTYIEELGKRESTPPPKYKELLNKEEGIAGPPPDSLKPLGPNDAIDALSSDFTCSSLQLTTCSPTADGKETEKEKSTEEALKAQSAGVIRSAAPPKEKRRKVEEDTMTEQALQALSASLGTRKPEPELDPSSIREVDEAKAKEEKVKKCGEDEETVPSEYRLKPATDKDGKPLLPEAEEKPKPLSESELIDELSEDFDQSKPTEKQSKPTEKTEASPAAAPYPVAEDVPRTSMCSLQSAPPTAAPAKGMVPDDAVEALAGSLPKKEADPEDGKPVEDKVKEKAKEEDRENFGEKEETIPPDYRLEEAKDKDGKPLLPKEVKEPLPPLSEDVLLDALSKDFTVPSDTSSPQFEDAKLSAVVSEVVSQTPAPTTQAAGPPPDCARDNKELDDALDQLSDTLGQRQPDPDENKPVEDKVKEKAKAEHRDKLGERDDTIPPKYQHLLDDNKEGTPGKPKDQRAQGIRNCGEKPAGAQDPIDALSGDFDSCPSTTETSTDTPKDKDKKPASVPKHLGNGGKAKDSTKAKEETSKPKADGKSTS.

2 disordered regions span residues 1 to 211 (MNPT…PNDA) and 226 to 493 (LTTC…PLPP). Basic and acidic residues-rich tracts occupy residues 7 to 17 (KAVKTEPEKKP) and 24 to 62 (VVHE…EKAV). Lys10 is covalently cross-linked (Glycyl lysine isopeptide (Lys-Gly) (interchain with G-Cter in SUMO2)). Lys28 bears the N6-acetyllysine mark. 2 stretches are compositionally biased toward low complexity: residues 63 to 72 (SKSSEQPPSE) and 94 to 103 (PAAAAAASAE). Ser65 carries the phosphoserine modification. A Phosphothreonine modification is found at Thr115. Acidic residues predominate over residues 135–151 (TALDDLIDTLGEPEEMK). One copy of the Inhibitory domain 1 repeat lies at 149 to 202 (EMKEDNTTYTGPEVSDPMSSTYIEELGKRESTPPPKYKELLNKEEGIAGPPPDS). Over residues 173–194 (ELGKRESTPPPKYKELLNKEEG) the composition is skewed to basic and acidic residues. Phosphoserine occurs at positions 202 and 230. Residues 234–248 (DGKETEKEKSTEEAL) show a composition bias toward basic and acidic residues. Residues 275–286 (TEQALQALSASL) are compositionally biased toward polar residues. 2 stretches are compositionally biased toward basic and acidic residues: residues 289-317 (RKPE…KKCG) and 327-352 (YRLK…KPLS). The stretch at 292-344 (EPELDPSSIREVDEAKAKEEKVKKCGEDEETVPSEYRLKPATDKDGKPLLPEA) is one Inhibitory domain 2 repeat. Phosphoserine occurs at positions 352, 354, and 361. Positions 355–364 (ELIDELSEDF) are enriched in acidic residues. Positions 365 to 381 (DQSKPTEKQSKPTEKTE) are enriched in basic and acidic residues. The residue at position 428 (Ser428) is a Phosphoserine. A compositionally biased stretch (basic and acidic residues) spans 430–489 (PKKEADPEDGKPVEDKVKEKAKEEDRENFGEKEETIPPDYRLEEAKDKDGKPLLPKEVKE). The Inhibitory domain 3 repeat unit spans residues 434 to 487 (ADPEDGKPVEDKVKEKAKEEDRENFGEKEETIPPDYRLEEAKDKDGKPLLPKEV). Phosphoserine is present on residues Ser504 and Ser515. Residues 527–705 (VSEVVSQTPA…KPKADGKSTS (179 aa)) are disordered. Over residues 533–542 (QTPAPTTQAA) the composition is skewed to low complexity. Position 563 is a phosphoserine (Ser563). The Inhibitory domain 4 repeat unit spans residues 571–624 (PDPDENKPVEDKVKEKAKAEHRDKLGERDDTIPPKYQHLLDDNKEGTPGKPKDQ). Basic and acidic residues predominate over residues 571 to 625 (PDPDENKPVEDKVKEKAKAEHRDKLGERDDTIPPKYQHLLDDNKEGTPGKPKDQR). The span at 651 to 662 (DSCPSTTETSTD) shows a compositional bias: low complexity. Residues 683–705 (KAKDSTKAKEETSKPKADGKSTS) show a composition bias toward basic and acidic residues.

This sequence belongs to the protease inhibitor I27 (calpastatin) family.

Specific inhibition of calpain (calcium-dependent cysteine protease). Plays a key role in postmortem tenderization of meat and have been proposed to be involved in muscle protein degradation in living tissue. The polypeptide is Calpastatin (CAST) (Bos taurus (Bovine)).